Here is a 1023-residue protein sequence, read N- to C-terminus: Vacuolar membrane protease (1023 aa).

The Cytoplasmic segment spans residues 1 to 80 (MRAAGCGGTG…FFRSVFGYRK (80 aa)). Polar residues predominate over residues 17-48 (KLSRSISQHQPKSMPQASVNSEQNPSVPNSPS). The segment at 17 to 59 (KLSRSISQHQPKSMPQASVNSEQNPSVPNSPSAHKPARSQSAQ) is disordered. Residues 81-101 (TSLTFLVALVFAATLLLSWAD) form a helical membrane-spanning segment. Topologically, residues 102 to 425 (SSLDFSVDMP…VVFSVSQVVS (324 aa)) are vacuolar. N-linked (GlcNAc...) asparagine glycosylation is found at N170 and N200. Zn(2+)-binding residues include H214 and D226. The active-site Proton acceptor is E259. E260, E285, and H357 together coordinate Zn(2+). Residues 426–446 (ANIALLVVVPVASLLLLFIIF) form a helical membrane-spanning segment. At 447 to 461 (RCNKGWGFNFVNAIK) the chain is on the cytoplasmic side. Residues 462–482 (YPLSLVASVLVLTFVSQVIIV) form a helical membrane-spanning segment. At 483–491 (PSNPFLVNS) the chain is on the vacuolar side. N-linked (GlcNAc...) asparagine glycosylation is present at N490. A helical transmembrane segment spans residues 492–512 (SIGLLVATLFSLFLLLNYIVL). The Cytoplasmic segment spans residues 513–529 (NGLNLVFKSFKGHQHDE). Residues 530-550 (KLIVMCESSFLTWILLLWSTV) traverse the membrane as a helical segment. The Vacuolar segment spans residues 551–564 (KLSHNKFGDDHTGE). Residues 565–585 (LFIPILFSLQAVACFLGFLGW) traverse the membrane as a helical segment. Residues 586 to 643 (CFKPSKKVKVSREEHQPLLSSNGSNYGTQDDDDSLAPSSSLSLQSGFSENCEVHETKS) are Cytoplasmic-facing. Polar residues predominate over residues 604–613 (LSSNGSNYGT). The disordered stretch occupies residues 604–626 (LSSNGSNYGTQDDDDSLAPSSSL). The helical transmembrane segment at 644–664 (FSYDWLVQFLVIVPISSLIIF) threads the bilayer. At 665-687 (NSGSLILNGLNKSIQESLSAQNL) the chain is on the vacuolar side. N675 carries N-linked (GlcNAc...) asparagine glycosylation. Residues 688 to 708 (IYKFIQIFVIVWSIPFLPFIF) traverse the membrane as a helical segment. Residues 709 to 712 (KLNR) lie on the Cytoplasmic side of the membrane. A helical transmembrane segment spans residues 713-733 (IIVLALSLVLLYGFFAVNITD). Residues 734-1023 (AFNDANPLKL…MVSVTKYIEV (290 aa)) lie on the Vacuolar side of the membrane. N815, N858, and N892 each carry an N-linked (GlcNAc...) asparagine glycan.

It belongs to the peptidase M28 family. Zn(2+) serves as cofactor.

Its subcellular location is the vacuole membrane. May be involved in vacuolar sorting and osmoregulation. This chain is Vacuolar membrane protease, found in Clavispora lusitaniae (strain ATCC 42720) (Yeast).